Consider the following 93-residue polypeptide: Small ribosomal subunit protein uS19 (93 aa).

Disordered regions lie at residues 1–25 and 74–93; these read MPRS…QNTK and FAPT…ARRR. 2 stretches are compositionally biased toward basic and acidic residues: residues 14-23 and 81-93; these read HLQKKVDDQN and RGHD…ARRR.

Belongs to the universal ribosomal protein uS19 family.

In terms of biological role, protein S19 forms a complex with S13 that binds strongly to the 16S ribosomal RNA. The chain is Small ribosomal subunit protein uS19 from Beutenbergia cavernae (strain ATCC BAA-8 / DSM 12333 / CCUG 43141 / JCM 11478 / NBRC 16432 / NCIMB 13614 / HKI 0122).